The primary structure comprises 472 residues: Adenosylhomocysteinase (472 aa).

The substrate site is built by Thr-62, Asp-137, and Glu-197. 198–200 is a binding site for NAD(+); sequence TTT. Substrate is bound by residues Lys-227 and Asp-231. NAD(+) is bound by residues Asn-232, 261 to 266, Glu-284, Asn-319, 340 to 342, and Asn-385; these read GYGDVG and IGH.

Belongs to the adenosylhomocysteinase family. Requires NAD(+) as cofactor.

Its subcellular location is the cytoplasm. It carries out the reaction S-adenosyl-L-homocysteine + H2O = L-homocysteine + adenosine. The protein operates within amino-acid biosynthesis; L-homocysteine biosynthesis; L-homocysteine from S-adenosyl-L-homocysteine: step 1/1. Functionally, may play a key role in the regulation of the intracellular concentration of adenosylhomocysteine. This chain is Adenosylhomocysteinase, found in Bordetella petrii (strain ATCC BAA-461 / DSM 12804 / CCUG 43448).